Here is a 38-residue protein sequence, read N- to C-terminus: Augerpeptide hhe53 (38 aa).

In terms of processing, contains 2 disulfide bonds. As to expression, expressed by the venom duct.

The protein resides in the secreted. This chain is Augerpeptide hhe53, found in Hastula hectica (Sea snail).